A 51-amino-acid chain; its full sequence is Small ribosomal subunit protein uS14 (51 aa).

Zn(2+) contacts are provided by cysteine 16, cysteine 19, cysteine 34, and cysteine 37.

Belongs to the universal ribosomal protein uS14 family. Zinc-binding uS14 subfamily. As to quaternary structure, part of the 30S ribosomal subunit. The cofactor is Zn(2+).

Its function is as follows. Binds 16S rRNA, required for the assembly of 30S particles. This is Small ribosomal subunit protein uS14 from Archaeoglobus fulgidus (strain ATCC 49558 / DSM 4304 / JCM 9628 / NBRC 100126 / VC-16).